Reading from the N-terminus, the 364-residue chain is Ribosomal RNA large subunit methyltransferase F (364 aa).

Residues 1-17 (MPKPAIKTAAKPATSSA) are compositionally biased toward low complexity. Residues 1 to 53 (MPKPAIKTAAKPATSSAGKRGKPITPKSVAKPQAAKPKTVSKPKVKPGEKKRL) are disordered. Residues 39-53 (TVSKPKVKPGEKKRL) are compositionally biased toward basic residues.

Belongs to the methyltransferase superfamily. METTL16/RlmF family.

The protein resides in the cytoplasm. It catalyses the reaction adenosine(1618) in 23S rRNA + S-adenosyl-L-methionine = N(6)-methyladenosine(1618) in 23S rRNA + S-adenosyl-L-homocysteine + H(+). Specifically methylates the adenine in position 1618 of 23S rRNA. The polypeptide is Ribosomal RNA large subunit methyltransferase F (Shewanella sp. (strain MR-4)).